The chain runs to 255 residues: MKIAPVAINHSPLSREVPSHAAPTQAKQTNLQSEAGDLDARKSSASSPETRALLATKTVLGRHKIEVPAFGGWFKKKSSKHETGGSSANADSSSVASDSTEKPLFRLTHVPYVSQGNERMGCWYACARMVGHSVEAGPRLGLPELYEGREGPAGLQDFSDVERFIHNEGLTRVDLPDNERFTHEELGALLYKHGPIIFGWKTPNDSWHMSVLTGVDKETSSITFHDPRQGPDLAMPLDYFNQRLAWQVPHAMLYR.

A disordered region spans residues 1 to 50; the sequence is MKIAPVAINHSPLSREVPSHAAPTQAKQTNLQSEAGDLDARKSSASSPET. Positions 1 to 71 are cleaved as a propeptide — removed in mature form; it reads MKIAPVAINH…RHKIEVPAFG (71 aa). The interval 70–71 is determinants of cleavage specificity; the sequence is FG. The interval 76 to 100 is disordered; the sequence is KKSSKHETGGSSANADSSSVASDST. Residues 86–98 are compositionally biased toward low complexity; it reads SSANADSSSVASD. C122 acts as the Nucleophile in catalysis. Active-site residues include H208 and D226.

Belongs to the peptidase C70 family. Interacts physically with plant cell ROC1 (Arabidopsis single-domain cyclophilin) and RIN4. Autocleaved inside plant cells upon activation by cyclophilin. Cleavage is crucial in subcellular location and in eliciting HR. Inhibited by cyclosporin A (cyclophilin inhibitor).

The protein localises to the secreted. It localises to the host cell membrane. Effector protein involved in gene-for-gene resistance in plants expressing RPS2. Its thiol protease activity is required for the degradation of plant cell RIN4 and consequent activation of RPS2 during bacterial infection. The activation of RPS2 is sufficient for the induction of hypersensitive response (HR) and plant resistance. Cleavage of RIN4 by AvrRpt2 also interferes with RPM1-mediated resistance activated by either AvrRpm1 or AvrB. Contributes to virulence in plants lacking the resistance protein RPS2 promoting pathogen growth and disease symptoms. Inhibits PAMP (pathogen-associated molecular patterns)-induced signaling compromising the host's basal defense system. Blocks plant callose deposition, flg22 (a peptide corresponding to the most conserved domain of flagellin) induced accumulation of PR-1, PR-2 and PR-5 and activation of GST6 transcription. The mechanism of virulence is unknown, but this activity is independent of ethylene and salicylic acid response pathways and independent of RIN4 disappearance. In Pseudomonas syringae pv. tomato, this protein is Cysteine protease avirulence protein AvrRpt2 (avrRpt2).